Consider the following 345-residue polypeptide: Protein RecA (345 aa).

Residue 65–72 (GPESSGKT) participates in ATP binding.

It belongs to the RecA family.

The protein localises to the cytoplasm. In terms of biological role, can catalyze the hydrolysis of ATP in the presence of single-stranded DNA, the ATP-dependent uptake of single-stranded DNA by duplex DNA, and the ATP-dependent hybridization of homologous single-stranded DNAs. It interacts with LexA causing its activation and leading to its autocatalytic cleavage. In Sulfurimonas denitrificans (strain ATCC 33889 / DSM 1251) (Thiomicrospira denitrificans (strain ATCC 33889 / DSM 1251)), this protein is Protein RecA.